A 123-amino-acid chain; its full sequence is Large ribosomal subunit protein uL29 (123 aa).

It belongs to the universal ribosomal protein uL29 family. In terms of assembly, component of the large ribosomal subunit.

It localises to the cytoplasm. In terms of biological role, component of the large ribosomal subunit. The ribosome is a large ribonucleoprotein complex responsible for the synthesis of proteins in the cell. The sequence is that of Large ribosomal subunit protein uL29 (rpl35) from Ictalurus punctatus (Channel catfish).